A 386-amino-acid chain; its full sequence is Adiponectin receptor protein 2 (386 aa).

The segment at 1–71 (MNEPTENRLG…HEYSDEAPQE (71 aa)) is disordered. Residues 1–147 (MNEPTENRLG…SIFRIHTETG (147 aa)) are Cytoplasmic-facing. The span at 15 to 41 (PEPDIRLRKGHQLDGTRRGDNDSHQGD) shows a compositional bias: basic and acidic residues. Residues 148–168 (NIWTHLLGCVFFLCLGIFYMF) form a helical membrane-spanning segment. Residues 169-181 (RPNISFVAPLQEK) lie on the Extracellular side of the membrane. The helical transmembrane segment at 182–202 (VVFGLFFLGAILCLSFSWLFH) threads the bilayer. His-202 is a Zn(2+) binding site. The Cytoplasmic segment spans residues 203–213 (TVYCHSEGVSR). A helical transmembrane segment spans residues 214–234 (LFSKLDYSGIALLIMGSFVPW). Topologically, residues 235 to 245 (LYYSFYCNPQP) are extracellular. Residues 246 to 266 (CFIYLIVICVLGIAAIIVSQW) traverse the membrane as a helical segment. Over 267-273 (DMFATPQ) the chain is Cytoplasmic. A helical membrane pass occupies residues 274–294 (YRGVRAGVFLGLGLSGIIPTL). The Extracellular segment spans residues 295 to 309 (HYVISEGFLKAATIG). Residues 310–330 (QIGWLMLMASLYITGAALYAA) form a helical membrane-spanning segment. Topologically, residues 331–348 (RIPERFFPGKCDIWFHSH) are cytoplasmic. Zn(2+)-binding residues include His-348 and His-352. The helical transmembrane segment at 349-369 (QLFHIFVVAGAFVHFHGVSNL) threads the bilayer. Residues 370-386 (QEFRFMIGGGCSEEDAL) are Extracellular-facing.

It belongs to the ADIPOR family. As to quaternary structure, may form homooligomers and heterooligomers with ADIPOR1. Interacts with APPL2 (via BAR domain); ADIPOQ dissociates this interaction. Ubiquitous. Highly expressed in skeletal muscle, liver and placenta. Weakly expressed in brain, heart, colon, spleen, kidney, thymus, small intestine, peripheral blood leukocytes and lung.

The protein localises to the cell membrane. Its function is as follows. Receptor for ADIPOQ, an essential hormone secreted by adipocytes that regulates glucose and lipid metabolism. Required for normal body fat and glucose homeostasis. ADIPOQ-binding activates a signaling cascade that leads to increased PPARA activity, and ultimately to increased fatty acid oxidation and glucose uptake. Has intermediate affinity for globular and full-length adiponectin. Required for normal revascularization after chronic ischemia caused by severing of blood vessels. The chain is Adiponectin receptor protein 2 from Homo sapiens (Human).